Reading from the N-terminus, the 446-residue chain is Enolase (446 aa).

Residues histidine 164 and glutamate 173 each coordinate substrate. Residue glutamate 216 is the Proton donor of the active site. 3 residues coordinate Mg(2+): aspartate 251, glutamate 302, and aspartate 329. The substrate site is built by glutamate 302 and aspartate 329. Lysine 354 (proton acceptor) is an active-site residue. Substrate contacts are provided by residues 381-384 (SHRS) and lysine 405.

The protein belongs to the enolase family. Homodimer. Mg(2+) serves as cofactor.

It is found in the cytoplasm. The catalysed reaction is (2R)-2-phosphoglycerate = phosphoenolpyruvate + H2O. It functions in the pathway carbohydrate degradation; glycolysis; pyruvate from D-glyceraldehyde 3-phosphate: step 4/5. The polypeptide is Enolase (ENO1) (Oryza sativa subsp. japonica (Rice)).